A 525-amino-acid chain; its full sequence is GMP synthase [glutamine-hydrolyzing] (525 aa).

The Glutamine amidotransferase type-1 domain occupies 9–207 (RILILDFGSQ…VLTISGCEAL (199 aa)). Catalysis depends on Cys86, which acts as the Nucleophile. Active-site residues include His181 and Glu183. The GMPS ATP-PPase domain occupies 208-400 (WTPAKIVDDA…LGLPYDMVYR (193 aa)). Residue 235–241 (SGGVDSS) coordinates ATP.

As to quaternary structure, homodimer.

The catalysed reaction is XMP + L-glutamine + ATP + H2O = GMP + L-glutamate + AMP + diphosphate + 2 H(+). The protein operates within purine metabolism; GMP biosynthesis; GMP from XMP (L-Gln route): step 1/1. Its function is as follows. Catalyzes the synthesis of GMP from XMP. The polypeptide is GMP synthase [glutamine-hydrolyzing] (Marinobacter nauticus (strain ATCC 700491 / DSM 11845 / VT8) (Marinobacter aquaeolei)).